The sequence spans 363 residues: Flagellar P-ring protein 2 (363 aa).

A signal peptide spans 1–18 (MLIRLLLLVICLAGPGVA).

The protein belongs to the FlgI family. As to quaternary structure, the basal body constitutes a major portion of the flagellar organelle and consists of four rings (L,P,S, and M) mounted on a central rod.

It localises to the periplasm. It is found in the bacterial flagellum basal body. Its function is as follows. Assembles around the rod to form the L-ring and probably protects the motor/basal body from shearing forces during rotation. This chain is Flagellar P-ring protein 2, found in Cereibacter sphaeroides (strain ATCC 17023 / DSM 158 / JCM 6121 / CCUG 31486 / LMG 2827 / NBRC 12203 / NCIMB 8253 / ATH 2.4.1.) (Rhodobacter sphaeroides).